Here is a 201-residue protein sequence, read N- to C-terminus: L(+)-tartrate dehydratase subunit beta (201 aa).

Histidine 37 is a catalytic residue.

The protein belongs to the class-I fumarase family. Heterotetramer of two alpha and two beta subunits.

It catalyses the reaction (2R,3R)-tartrate = oxaloacetate + H2O. The protein is L(+)-tartrate dehydratase subunit beta (ttdB) of Escherichia coli O6:K15:H31 (strain 536 / UPEC).